Here is a 209-residue protein sequence, read N- to C-terminus: Uracil phosphoribosyltransferase (209 aa).

5-phospho-alpha-D-ribose 1-diphosphate contacts are provided by residues Arg-79, Arg-104, and 131 to 139 (DPMLATGGT). Residues Ile-194 and 199-201 (GDA) contribute to the uracil site. Asp-200 lines the 5-phospho-alpha-D-ribose 1-diphosphate pocket.

Belongs to the UPRTase family. Mg(2+) is required as a cofactor.

It catalyses the reaction UMP + diphosphate = 5-phospho-alpha-D-ribose 1-diphosphate + uracil. It functions in the pathway pyrimidine metabolism; UMP biosynthesis via salvage pathway; UMP from uracil: step 1/1. With respect to regulation, allosterically activated by GTP. Functionally, catalyzes the conversion of uracil and 5-phospho-alpha-D-ribose 1-diphosphate (PRPP) to UMP and diphosphate. This Pseudoalteromonas atlantica (strain T6c / ATCC BAA-1087) protein is Uracil phosphoribosyltransferase.